A 324-amino-acid chain; its full sequence is Glyoxylate/hydroxypyruvate reductase B (324 aa).

Residues arginine 237 and glutamate 266 contribute to the active site. Histidine 285 functions as the Proton donor in the catalytic mechanism.

It belongs to the D-isomer specific 2-hydroxyacid dehydrogenase family. GhrB subfamily. As to quaternary structure, homodimer.

It localises to the cytoplasm. The catalysed reaction is glycolate + NADP(+) = glyoxylate + NADPH + H(+). It catalyses the reaction (R)-glycerate + NAD(+) = 3-hydroxypyruvate + NADH + H(+). It carries out the reaction (R)-glycerate + NADP(+) = 3-hydroxypyruvate + NADPH + H(+). Its function is as follows. Catalyzes the NADPH-dependent reduction of glyoxylate and hydroxypyruvate into glycolate and glycerate, respectively. This Shigella boydii serotype 4 (strain Sb227) protein is Glyoxylate/hydroxypyruvate reductase B.